The chain runs to 266 residues: 4-hydroxy-tetrahydrodipicolinate reductase (266 aa).

NAD(+)-binding positions include 8–13 (GAAGRM) and Glu-33. An NADP(+)-binding site is contributed by Arg-34. NAD(+) contacts are provided by residues 97-99 (GST) and 121-124 (APNM). The active-site Proton donor/acceptor is the His-154. Residue His-155 coordinates (S)-2,3,4,5-tetrahydrodipicolinate. Lys-158 (proton donor) is an active-site residue. 164–165 (GT) is a (S)-2,3,4,5-tetrahydrodipicolinate binding site.

This sequence belongs to the DapB family.

Its subcellular location is the cytoplasm. The catalysed reaction is (S)-2,3,4,5-tetrahydrodipicolinate + NAD(+) + H2O = (2S,4S)-4-hydroxy-2,3,4,5-tetrahydrodipicolinate + NADH + H(+). The enzyme catalyses (S)-2,3,4,5-tetrahydrodipicolinate + NADP(+) + H2O = (2S,4S)-4-hydroxy-2,3,4,5-tetrahydrodipicolinate + NADPH + H(+). The protein operates within amino-acid biosynthesis; L-lysine biosynthesis via DAP pathway; (S)-tetrahydrodipicolinate from L-aspartate: step 4/4. In terms of biological role, catalyzes the conversion of 4-hydroxy-tetrahydrodipicolinate (HTPA) to tetrahydrodipicolinate. In Trichlorobacter lovleyi (strain ATCC BAA-1151 / DSM 17278 / SZ) (Geobacter lovleyi), this protein is 4-hydroxy-tetrahydrodipicolinate reductase.